The sequence spans 76 residues: Small proline-rich protein 2G (76 aa).

3 repeat units span residues 21–29, 30–38, and 39–47. A 3 X 9 AA approximate tandem repeats region spans residues 21-47; the sequence is PKCPEPCPLPKCPEPCPPPKCPEPCPE. Positions 55-76 are disordered; sequence QQKCPPVQTPPPCQQKCPPKSK.

Belongs to the cornifin (SPRR) family. As to expression, expressed in uterus.

The protein localises to the cytoplasm. Its function is as follows. Cross-linked envelope protein of keratinocytes. It is a keratinocyte protein that first appears in the cell cytosol, but ultimately becomes cross-linked to membrane proteins by transglutaminase. All that results in the formation of an insoluble envelope beneath the plasma membrane. The sequence is that of Small proline-rich protein 2G (Sprr2g) from Mus musculus (Mouse).